The primary structure comprises 161 residues: Urocortin-3 (161 aa).

The N-terminal stretch at 1–21 is a signal peptide; it reads MLMPVHFLLLLLLLLGGPRTG. A propeptide spanning residues 22 to 118 is cleaved from the precursor; the sequence is LPHKFYKAKP…QDTAKSPHRT (97 aa). Positions 64–118 are disordered; that stretch reads SRDASSGEEEEGKEKKTFPISGARGGARGTRYRYVSQAQPRGKPRQDTAKSPHRT. Residue Ile-157 is modified to Isoleucine amide.

This sequence belongs to the sauvagine/corticotropin-releasing factor/urotensin I family. As to quaternary structure, binds with high affinity to CRF receptors 2-alpha and 2-beta.

It is found in the secreted. In terms of biological role, suppresses food intake, delays gastric emptying and decreases heat-induced edema. Might represent an endogenous ligand for maintaining homeostasis after stress. The polypeptide is Urocortin-3 (UCN3) (Homo sapiens (Human)).